The sequence spans 576 residues: MAGUK p55 subfamily member 2 (576 aa).

L27 domains follow at residues 8-60 and 84-142; these read SETA…FMQQ and LEAV…YETP. The residue at position 42 (serine 42) is a Phosphoserine. Threonine 141 is subject to Phosphothreonine. Residue serine 145 is modified to Phosphoserine. Positions 185–240 constitute a PDZ domain; the sequence is ELVIARILHGGMVAQQGLLHVGDIIKEVNGQPVGSDPRALQELLRNASGSVILKIL. The region spanning 249–317 is the SH3 domain; it reads PRQVFVKCHF…PSQLLEEKRK (69 aa). The Guanylate kinase-like domain occupies 374–561; the sequence is RKTLVLIGAQ…TFRELQTAME (188 aa).

The protein belongs to the MAGUK family. In terms of assembly, can homomultimerise. Interacts with CACNG2. Interacts (via the SH3-Guanylate kinase-like sub-module) with DLG4/PSD95 and DLGAP1/GKAP. Interacts (via the PDZ domain) with CADM1 (via C-terminus). Interacts with KCNN2/SK2 (via N-terminal domain). Interacts with SRC. Phosphorylated by SRC.

Its subcellular location is the cytoplasm. The protein localises to the cytoskeleton. It is found in the membrane. It localises to the cell projection. The protein resides in the dendrite. Its subcellular location is the postsynaptic density. Postsynaptic MAGUK scaffold protein that links CADM1 cell adhesion molecules to core components of the postsynaptic density. In CA1 pyramidal neurons, required for synaptic KCNN2-containing channel function and long-term potentiation expression. Seems to negatively regulate SRC function in epithelial cells. In Homo sapiens (Human), this protein is MAGUK p55 subfamily member 2.